The chain runs to 232 residues: Platelet-activating factor acetylhydrolase IB subunit alpha1 (232 aa).

Residues 1–20 are disordered; sequence MSGEGENPASKPTPVQDVQG. At S2 the chain carries N-acetylserine. Phosphoserine is present on S2. Residues S48, D193, and H196 contribute to the active site.

The protein belongs to the 'GDSL' lipolytic enzyme family. Platelet-activating factor acetylhydrolase IB beta/gamma subunits subfamily. In terms of assembly, forms a catalytic dimer which is either homodimer (alpha1/alpha1 homodimer) or heterodimer with PAFAH1B2 (alpha1/alpha2 heterodimer). Component of the cytosolic (PAF-AH (I)) heterotetrameric enzyme, which is composed of PAFAH1B1 (beta), PAFAH1B2 (alpha2) and PAFAH1B3 (alpha1) subunits. The catalytic activity of the enzyme resides in the alpha1 (PAFAH1B3) and alpha2 (PAFAH1B2) subunits, whereas the beta subunit (PAFAH1B1) has regulatory activity. Trimer formation is not essential for the catalytic activity. Interacts with VLDLR; this interaction may modulate the Reelin pathway. In terms of tissue distribution, expressed in brain, spleen, lung, liver, kidney and testis. Not expressed in heart and skeletal muscle. Expressed in fetal brain as heterodimer. Not expressed in adult tissues. Expressed exclusively in granule cells.

The protein resides in the cytoplasm. The catalysed reaction is a 1-O-alkyl-2-acetyl-sn-glycero-3-phosphocholine + H2O = a 1-O-alkyl-sn-glycero-3-phosphocholine + acetate + H(+). It catalyses the reaction 1-O-hexadecyl-2-acetyl-sn-glycero-3-phosphocholine + H2O = 1-O-hexadecyl-sn-glycero-3-phosphocholine + acetate + H(+). The enzyme catalyses 1-O-hexadecyl-2-acetyl-sn-glycero-3-phosphate + H2O = 1-O-hexadecyl-sn-glycero-3-phosphate + acetate + H(+). With respect to regulation, beta subunit (PAFAH1B1) inhibits the acetylhydrolase activity of the alpha1/alpha1 catalytic homodimer. Its function is as follows. Alpha1 catalytic subunit of the cytosolic type I platelet-activating factor (PAF) acetylhydrolase (PAF-AH (I)) heterotetrameric enzyme that catalyzes the hydrolyze of the acetyl group at the sn-2 position of PAF and its analogs and modulates the action of PAF. The activity and substrate specificity of PAF-AH (I) are affected by its subunit composition. Both alpha1/alpha1 homodimer (PAFAH1B3/PAFAH1B3 homodimer) and alpha1/alpha2 heterodimer(PAFAH1B3/PAFAH1B2 heterodimer) hydrolyze 1-O-alkyl-2-acetyl-sn-glycero-3-phosphoric acid (AAGPA) more efficiently than PAF, but they have little hydrolytic activity towards 1-O-alkyl-2-acetyl-sn-glycero-3-phosphorylethanolamine (AAGPE). Plays an important role during the development of brain. The polypeptide is Platelet-activating factor acetylhydrolase IB subunit alpha1 (Rattus norvegicus (Rat)).